Here is a 431-residue protein sequence, read N- to C-terminus: Glutamate-1-semialdehyde 2,1-aminomutase (431 aa).

Lys267 bears the N6-(pyridoxal phosphate)lysine mark.

The protein belongs to the class-III pyridoxal-phosphate-dependent aminotransferase family. HemL subfamily. Homodimer. It depends on pyridoxal 5'-phosphate as a cofactor.

It localises to the cytoplasm. The enzyme catalyses (S)-4-amino-5-oxopentanoate = 5-aminolevulinate. It participates in porphyrin-containing compound metabolism; protoporphyrin-IX biosynthesis; 5-aminolevulinate from L-glutamyl-tRNA(Glu): step 2/2. The chain is Glutamate-1-semialdehyde 2,1-aminomutase from Syntrophomonas wolfei subsp. wolfei (strain DSM 2245B / Goettingen).